The following is a 319-amino-acid chain: Replication factor C small subunit 2 (319 aa).

44 to 51 is a binding site for ATP; sequence GPPGTGKT.

This sequence belongs to the activator 1 small subunits family. RfcS subfamily. In terms of assembly, heteromultimer composed of small subunits (RfcS) and large subunits (RfcL).

Its function is as follows. Part of the RFC clamp loader complex which loads the PCNA sliding clamp onto DNA. In Pyrobaculum aerophilum (strain ATCC 51768 / DSM 7523 / JCM 9630 / CIP 104966 / NBRC 100827 / IM2), this protein is Replication factor C small subunit 2.